The sequence spans 196 residues: Hypoxanthine/guanine phosphoribosyltransferase (196 aa).

It belongs to the purine/pyrimidine phosphoribosyltransferase family. Archaeal HPRT subfamily. As to quaternary structure, homodimer.

It localises to the cytoplasm. It catalyses the reaction IMP + diphosphate = hypoxanthine + 5-phospho-alpha-D-ribose 1-diphosphate. The catalysed reaction is GMP + diphosphate = guanine + 5-phospho-alpha-D-ribose 1-diphosphate. The protein operates within purine metabolism; IMP biosynthesis via salvage pathway; IMP from hypoxanthine: step 1/1. Catalyzes a salvage reaction resulting in the formation of IMP that is energically less costly than de novo synthesis. In Methanocaldococcus sp. (strain FS406-22), this protein is Hypoxanthine/guanine phosphoribosyltransferase.